The chain runs to 205 residues: MESMKQVVVATKNMGKVREFAELFERFDLEVKSLHDFPHIEEVEETGETFEENAILKADSLSRQLNAIVIADDSGLIVDALNGKPGVYSARFAGEPKDDQANIDKVLQELNEIPFDKRKARFYCALAVAFPEGDKKPVIVNGTCEGFILEQRRGENGFGYDPIFYVEEYKKAMAELSSDEKNAISHRGRALRKLEEKIPEWFLGE.

11-16 contributes to the substrate binding site; it reads TKNMGK. Glu44 and Asp73 together coordinate Mg(2+). Residue Asp73 is the Proton acceptor of the active site. Substrate is bound by residues Ser74, 158-161, Lys181, and 186-187; these read FGYD and HR.

The protein belongs to the HAM1 NTPase family. Homodimer. Requires Mg(2+) as cofactor.

It carries out the reaction XTP + H2O = XMP + diphosphate + H(+). It catalyses the reaction dITP + H2O = dIMP + diphosphate + H(+). The enzyme catalyses ITP + H2O = IMP + diphosphate + H(+). Its function is as follows. Pyrophosphatase that catalyzes the hydrolysis of nucleoside triphosphates to their monophosphate derivatives, with a high preference for the non-canonical purine nucleotides XTP (xanthosine triphosphate), dITP (deoxyinosine triphosphate) and ITP. Seems to function as a house-cleaning enzyme that removes non-canonical purine nucleotides from the nucleotide pool, thus preventing their incorporation into DNA/RNA and avoiding chromosomal lesions. The protein is dITP/XTP pyrophosphatase of Bacillus cereus (strain ATCC 14579 / DSM 31 / CCUG 7414 / JCM 2152 / NBRC 15305 / NCIMB 9373 / NCTC 2599 / NRRL B-3711).